Here is a 127-residue protein sequence, read N- to C-terminus: Large ribosomal subunit protein bL19 (127 aa).

Belongs to the bacterial ribosomal protein bL19 family.

This protein is located at the 30S-50S ribosomal subunit interface and may play a role in the structure and function of the aminoacyl-tRNA binding site. The protein is Large ribosomal subunit protein bL19 of Ruegeria pomeroyi (strain ATCC 700808 / DSM 15171 / DSS-3) (Silicibacter pomeroyi).